The following is a 24-amino-acid chain: Brevinin-1PTa (24 aa).

An intrachain disulfide couples Cys-18 to Cys-24.

Expressed by the skin glands.

It is found in the secreted. Has antibacterial activity against the Gram-positive bacterium S.aureus ATCC 25923 (MIC=3 uM) and the Gram-negative bacterium E.coli ATCC 25726 (MIC=24 uM). This chain is Brevinin-1PTa, found in Pulchrana picturata (Malaysian fire frog).